The primary structure comprises 119 residues: Centrocin 1 (119 aa).

Residues 1 to 20 form the signal peptide; sequence MMIKIAVVLCAVMATTMVRA. Positions 21–50 are excised as a propeptide; that stretch reads KYVEEQELADLLDLLISEEVSSPDDAVALQ. Trp52 and Trp53 each carry 6'-bromotryptophan. Cys75 and Cys110 are oxidised to a cystine. Residues 81–104 constitute a propeptide that is removed on maturation; it reads SPQEARAKVLEAFPEMKEADLDEE. Asn117 carries the post-translational modification Asparagine amide.

In terms of assembly, heterodimer of a light and a heavy chain, probably disulfide-linked.

Functionally, has antimicrobial activity against Gram-negative bacteria, Gram-positive bacteria and against fungi with minimum inhibitory concentration (MIC) between 0.78 uM and 50 uM. Shows little hemolytic activity even at a concentration of 100 uM. Its function is as follows. Has no antimicrobial activity. Shows no hemolytic activity. The polypeptide is Centrocin 1 (Echinus esculentus (Sea urchin)).